The sequence spans 343 residues: Signaling lymphocytic activation molecule (343 aa).

An N-terminal signal peptide occupies residues 1–24 (MDPKGSLSWRILLFLSLAFELSYG). Over 25-242 (TGGGVMDCPV…KQESSSESSP (218 aa)) the chain is Extracellular. The region spanning 29–138 (VMDCPVILQK…VQQFCKQLKL (110 aa)) is the Ig-like V-type domain. 9 N-linked (GlcNAc...) asparagine glycosylation sites follow: Asn54, Asn58, Asn103, Asn126, Asn151, Asn158, Asn192, Asn211, and Asn226. One can recognise an Ig-like C2-type domain in the interval 145–228 (PEIKVLNKTQ…SSISRTFNLS (84 aa)). 2 cysteine pairs are disulfide-bonded: Cys161-Cys232 and Cys167-Cys212. A helical membrane pass occupies residues 243–265 (WMQYTLVPLGVVIIFILVFTAII). Topologically, residues 266-343 (MMKRQGKSNH…VYASVTLPES (78 aa)) are cytoplasmic. An ITSM 1 motif is present at residues 286–291 (TIYAQV). 3 positions are modified to phosphotyrosine; by FYN: Tyr288, Tyr315, and Tyr335. Residues 313 to 318 (TIYVAA) carry the SH2-binding motif. The interval 320–343 (EPAPESVQEPNPTTVYASVTLPES) is disordered. Over residues 327–343 (QEPNPTTVYASVTLPES) the composition is skewed to polar residues. Residues 333-338 (TVYASV) carry the ITSM 2 motif.

In terms of assembly, interacts (via cytoplasmic domain) with SH2D1A and SH2D1B; SH2D1A mediates association with FYN; SH2D1A binds to phosphorylated and not phosphorylated ITSM 1. Interacts (via cytoplasmic domain phosphorylated on tyrosine residues) with INPP5D and PTPN11; presence of SH2D1A facilitates binding to INPP5D. Interacts with MAP4K1. Interacts with PIK3C3, BECN1 and UVRAG; indicative for an association with PI3K complex II (PI3KC3-C2). In terms of processing, phosphorylated on tyrosine residues by FYN.

It localises to the cell membrane. Functionally, self-ligand receptor of the signaling lymphocytic activation molecule (SLAM) family. SLAM receptors triggered by homo- or heterotypic cell-cell interactions are modulating the activation and differentiation of a wide variety of immune cells and thus are involved in the regulation and interconnection of both innate and adaptive immune response. Activities are controlled by presence or absence of small cytoplasmic adapter proteins, SH2D1A/SAP and/or SH2D1B/EAT-2. SLAMF1-induced signal-transduction events in T-lymphocytes are different from those in B-cells. Two modes of SLAMF1 signaling seem to exist: one depending on SH2D1A (and perhaps SH2D1B) and another in which protein-tyrosine phosphatase 2C (PTPN11)-dependent signal transduction operates. Initially it has been proposed that association with SH2D1A prevents binding to inhibitory effectors including INPP5D/SHIP1 and PTPN11/SHP-2. However, signaling is also regulated by SH2D1A which can simultaneously interact with and recruit FYN which subsequently phosphorylates and activates SLAMF1. Mediates IL-2-independent proliferation of activated T-cells during immune responses and induces IFN-gamma production. Downstreaming signaling involves INPP5D, DOK1 and DOK2 leading to inhibited IFN-gamma production in T-cells, and PRKCQ, BCL10 and NFKB1 leading to increased T-cell activation and Th2 cytokine production. Promotes T-cell receptor-induced IL-4 secretion by CD4(+) cells. Inhibits antigen receptor-mediated production of IFN-gamma, but not IL-2, in CD4(-)/CD8(-) T-cells. Required for IL-4 production by germinal centers T follicular helper (T(Fh))cells. May inhibit CD40-induced signal transduction in monocyte-derived dendritic cells. May play a role in allergic responses and may regulate allergen-induced Th2 cytokine and Th1 cytokine secretion. In conjunction with SLAMF6 controls the transition between positive selection and the subsequent expansion and differentiation of the thymocytic natural killer T (NKT) cell lineage. Involved in the peripheral differentiation of indifferent natural killer T (iNKT) cells toward a regulatory NKT2 type. In macrophages involved in down-regulation of IL-12, TNF-alpha and nitric oxide in response to lipopolysaccharide (LPS). In B-cells activates the ERK signaling pathway independently of SH2D1A but implicating both, SYK and INPP5D, and activates Akt signaling dependent on SYK and SH2D1A. In conjunction with CD84/SLAMF5 and SLAMF6 may be a negative regulator of the humoral immune response. Its function is as follows. (Microbial infection) Involved in innate immune response against Gram-negative bacteria in macrophages; probably recognizes OmpC and/or OmpF on the bacterial surface, regulates phagosome maturation and recruitment of the PI3K complex II (PI3KC3-C2) leading to accumulated of PdtIns(3)P and NOX2 activity in the phagosomes. The polypeptide is Signaling lymphocytic activation molecule (Slamf1) (Mus musculus (Mouse)).